Reading from the N-terminus, the 379-residue chain is Elongation factor Ts, mitochondrial (379 aa).

A mitochondrion-targeting transit peptide spans 1 to 45 (MALYRTARRPLQMMLFSRLGNPEQNYSSWARKDASQSAFGMFVRL).

Belongs to the EF-Ts family.

Its subcellular location is the mitochondrion. Functionally, associates with the EF-Tu.GDP complex and induces the exchange of GDP to GTP. It remains bound to the aminoacyl-tRNA.EF-Tu.GTP complex up to the GTP hydrolysis stage on the ribosome. The chain is Elongation factor Ts, mitochondrial from Ricinus communis (Castor bean).